Consider the following 514-residue polypeptide: Peptide chain release factor 3 (514 aa).

The tr-type G domain occupies Lys8–His268. GTP contacts are provided by residues Ser17–Thr24, Asp85–His89, and Asn139–Asp142.

This sequence belongs to the TRAFAC class translation factor GTPase superfamily. Classic translation factor GTPase family. PrfC subfamily.

Its subcellular location is the cytoplasm. Functionally, increases the formation of ribosomal termination complexes and stimulates activities of RF-1 and RF-2. It binds guanine nucleotides and has strong preference for UGA stop codons. It may interact directly with the ribosome. The stimulation of RF-1 and RF-2 is significantly reduced by GTP and GDP, but not by GMP. The polypeptide is Peptide chain release factor 3 (Streptococcus pneumoniae (strain P1031)).